The sequence spans 314 residues: MSDTPKRCGFAAVIGSPNAGKSTLVNALVGEKVTIVTHKVQTTRFAVRGVALAGETQIVLVDTPGVFAPKTRLDKSMVAAAWSGAGEADTIMHVVDAGARARMEHGGAKSGDSRMVEDDDRVTEGLKKTEQKAILVLNKVDLMPRDQLLAMSQELYETGVYSEVFMISAKTGSGVPQLREFIAGLMPEGVWHYPADQVADLPARILAAEITREKVYLRLHEELPYASMVETEVWKKLRDGSLRIEQSIIVERETQKPIVLGKGGSAVKSIGEASRKELEEVLGCKVHLFLNVKVDAKWMARRSHYKDVGLDFDV.

One can recognise an Era-type G domain in the interval 7–188 (RCGFAAVIGS…REFIAGLMPE (182 aa)). Positions 15-22 (GSPNAGKS) are G1. 15–22 (GSPNAGKS) contributes to the GTP binding site. Residues 41–45 (QTTRF) form a G2 region. The tract at residues 62-65 (DTPG) is G3. Residues 62–66 (DTPGV) and 138–141 (NKVD) contribute to the GTP site. Residues 138-141 (NKVD) form a G4 region. A G5 region spans residues 167 to 169 (ISA). Positions 219 to 296 (LHEELPYASM…HLFLNVKVDA (78 aa)) constitute a KH type-2 domain.

This sequence belongs to the TRAFAC class TrmE-Era-EngA-EngB-Septin-like GTPase superfamily. Era GTPase family. Monomer.

The protein localises to the cytoplasm. Its subcellular location is the cell inner membrane. An essential GTPase that binds both GDP and GTP, with rapid nucleotide exchange. Plays a role in 16S rRNA processing and 30S ribosomal subunit biogenesis and possibly also in cell cycle regulation and energy metabolism. The protein is GTPase Era of Maricaulis maris (strain MCS10) (Caulobacter maris).